Reading from the N-terminus, the 598-residue chain is IQ calmodulin-binding motif-containing protein 1 (598 aa).

Positions 1-157 are interaction with BBS1, BBS8 and BBS9; it reads MKPTGTDPRI…SLFWLLGGHV (157 aa). The interval 287 to 598 is interaction with CEP290, BBS1, BBS2, BBS4, BBS5, BBS7, BBS8 and BBS9; that stretch reads QEVEEQKLHQ…NLFIGGTKPP (312 aa). IQ domains lie at 294-317, 318-338, 387-416, and 417-437; these read LHQA…LKKL, PSAV…MLLE, EEKS…SLIE, and YKAA…CRKK. Residues 336–373 are a coiled coil; that stretch reads LLEINRQKEEEDLKLQLQLQRQRAMRLSRELQLSMLEI. The interaction with BBS1, BBS2, BBS4, BBS7, BBS8 and BBS9 stretch occupies residues 530 to 598; it reads AEGKEPELFL…NLFIGGTKPP (69 aa). The residue at position 572 (S572) is a Phosphoserine.

As to quaternary structure, interacts with CEP290/NPHP6; IQCB1/NPHP5 and CEP290 are proposed to form a functional NPHP5-6 module/NPHP6; localized to the centrosome. Interacts with calmodulin, ATXN10. Interacts with NPHP1, INVS, NPHP4 and RPGRIP1L; these interactions likely require additional interactors. Associates with the BBSome complex; interacts with BBS1, BBS2, BBS4, BBS5, BBS7, BBS8 and BBS9. In terms of tissue distribution, ubiquitously expressed in fetal and adult tissues. Localized to the outer segments and connecting cilia of photoreceptor cells. Up-regulated in a number of primary colorectal and gastric tumors.

Its subcellular location is the cytoplasm. It is found in the cytoskeleton. It localises to the microtubule organizing center. The protein resides in the centrosome. The protein localises to the centriole. Its function is as follows. Involved in ciliogenesis. The function in an early step in cilia formation depends on its association with CEP290/NPHP6. Involved in regulation of the BBSome complex integrity, specifically for presence of BBS2 and BBS5 in the complex, and in ciliary targeting of selected BBSome cargos. May play a role in controlling entry of the BBSome complex to cilia possibly implicating CEP290/NPHP6. This Homo sapiens (Human) protein is IQ calmodulin-binding motif-containing protein 1 (IQCB1).